We begin with the raw amino-acid sequence, 360 residues long: Membrane-bound lytic murein transglycosylase C (360 aa).

The N-terminal stretch at 1–16 (MKKLLALAVIAPLLIS) is a signal peptide. Cys17 carries the N-palmitoyl cysteine lipid modification. Cys17 carries S-diacylglycerol cysteine lipidation.

This sequence belongs to the transglycosylase Slt family.

It localises to the cell outer membrane. It carries out the reaction Exolytic cleavage of the (1-&gt;4)-beta-glycosidic linkage between N-acetylmuramic acid (MurNAc) and N-acetylglucosamine (GlcNAc) residues in peptidoglycan, from either the reducing or the non-reducing ends of the peptidoglycan chains, with concomitant formation of a 1,6-anhydrobond in the MurNAc residue.. Its function is as follows. Murein-degrading enzyme. May play a role in recycling of muropeptides during cell elongation and/or cell division. The chain is Membrane-bound lytic murein transglycosylase C from Salmonella typhi.